The primary structure comprises 446 residues: Probable glycine dehydrogenase (decarboxylating) subunit 1 (446 aa).

This sequence belongs to the GcvP family. N-terminal subunit subfamily. The glycine cleavage system is composed of four proteins: P, T, L and H. In this organism, the P 'protein' is a heterodimer of two subunits.

The enzyme catalyses N(6)-[(R)-lipoyl]-L-lysyl-[glycine-cleavage complex H protein] + glycine + H(+) = N(6)-[(R)-S(8)-aminomethyldihydrolipoyl]-L-lysyl-[glycine-cleavage complex H protein] + CO2. In terms of biological role, the glycine cleavage system catalyzes the degradation of glycine. The P protein binds the alpha-amino group of glycine through its pyridoxal phosphate cofactor; CO(2) is released and the remaining methylamine moiety is then transferred to the lipoamide cofactor of the H protein. In Desulfitobacterium hafniense (strain DSM 10664 / DCB-2), this protein is Probable glycine dehydrogenase (decarboxylating) subunit 1.